Reading from the N-terminus, the 100-residue chain is NADH-quinone oxidoreductase subunit K (100 aa).

A run of 3 helical transmembrane segments spans residues 4–24 (LQHG…GLVI), 28–48 (LLFM…AFVV), and 60–80 (IMYI…LALL).

This sequence belongs to the complex I subunit 4L family. NDH-1 is composed of 13 different subunits. Subunits NuoA, H, J, K, L, M, N constitute the membrane sector of the complex.

The protein resides in the cell inner membrane. The enzyme catalyses a quinone + NADH + 5 H(+)(in) = a quinol + NAD(+) + 4 H(+)(out). NDH-1 shuttles electrons from NADH, via FMN and iron-sulfur (Fe-S) centers, to quinones in the respiratory chain. The immediate electron acceptor for the enzyme in this species is believed to be ubiquinone. Couples the redox reaction to proton translocation (for every two electrons transferred, four hydrogen ions are translocated across the cytoplasmic membrane), and thus conserves the redox energy in a proton gradient. The polypeptide is NADH-quinone oxidoreductase subunit K (Cronobacter sakazakii (strain ATCC BAA-894) (Enterobacter sakazakii)).